Reading from the N-terminus, the 205-residue chain is Putative 3-methyladenine DNA glycosylase (205 aa).

It belongs to the DNA glycosylase MPG family.

The polypeptide is Putative 3-methyladenine DNA glycosylase (Bacillus cereus (strain G9842)).